The primary structure comprises 88 residues: Alpha-latrotoxin-associated low molecular weight protein (88 aa).

The N-terminal stretch at 1–18 (MSKLFFVVFLCLIISVFA) is a signal peptide.

It belongs to the arthropod CHH/MIH/GIH/VIH hormone family. In terms of tissue distribution, expressed by the venom gland.

It localises to the secreted. May increase the toxicity of alpha-latrotoxin and/or other venom components. Is non-toxic to mice and to the cockroach Periplaneta americana. The protein is Alpha-latrotoxin-associated low molecular weight protein of Latrodectus tredecimguttatus (Mediterranean black widow spider).